Here is a 603-residue protein sequence, read N- to C-terminus: Elongation factor 4 (603 aa).

In terms of domain architecture, tr-type G spans 7–189 (KKIRNFCIIA…SVVKNVPPPE (183 aa)). GTP is bound by residues 19-24 (DHGKST) and 136-139 (NKID).

It belongs to the TRAFAC class translation factor GTPase superfamily. Classic translation factor GTPase family. LepA subfamily.

It is found in the cell membrane. It carries out the reaction GTP + H2O = GDP + phosphate + H(+). In terms of biological role, required for accurate and efficient protein synthesis under certain stress conditions. May act as a fidelity factor of the translation reaction, by catalyzing a one-codon backward translocation of tRNAs on improperly translocated ribosomes. Back-translocation proceeds from a post-translocation (POST) complex to a pre-translocation (PRE) complex, thus giving elongation factor G a second chance to translocate the tRNAs correctly. Binds to ribosomes in a GTP-dependent manner. The protein is Elongation factor 4 of Acetivibrio thermocellus (strain ATCC 27405 / DSM 1237 / JCM 9322 / NBRC 103400 / NCIMB 10682 / NRRL B-4536 / VPI 7372) (Clostridium thermocellum).